Consider the following 299-residue polypeptide: Leucine zipper transcription factor-like protein 1 (299 aa).

Residues Gly-145 to Asp-299 form an interaction with BSS9 region. Residues Gly-145 to Asp-299 adopt a coiled-coil conformation.

Belongs to the LZTFL1 family. In terms of assembly, self-associates. Interacts with BBS9; the interaction mediates the association of LZTL1 with the BBsome complex and regulates BBSome ciliary trafficking.

It localises to the cytoplasm. Regulates ciliary localization of the BBSome complex. Together with the BBSome complex, controls SMO ciliary trafficking and contributes to the sonic hedgehog (SHH) pathway regulation. May play a role in neurite outgrowth. May have tumor suppressor function. The sequence is that of Leucine zipper transcription factor-like protein 1 (Lztfl1) from Rattus norvegicus (Rat).